Here is a 115-residue protein sequence, read N- to C-terminus: Probable non-functional T cell receptor beta variable 7-3 (115 aa).

The signal sequence occupies residues 1–21; the sequence is MGTRLLCWAALCLLGADHTGA. An Ig-like domain is found at 22–115; sequence GVSQTPSNKV…SAAYLRASSL (94 aa).

Most probably, the alpha-beta TR is not assembled due to incorrect folding of the beta chain. Alpha-beta TR is a heterodimer composed of an alpha and beta chain; disulfide-linked. The alpha-beta TR is associated with the transmembrane signaling CD3 coreceptor proteins to form the TR-CD3 (TcR or TCR). The assembly of alpha-beta TR heterodimers with CD3 occurs in the endoplasmic reticulum where a single alpha-beta TR heterodimer associates with one CD3D-CD3E heterodimer, one CD3G-CD3E heterodimer and one CD247 homodimer forming a stable octameric structure. CD3D-CD3E and CD3G-CD3E heterodimers preferentially associate with TR alpha and TR beta chains, respectively. The association of the CD247 homodimer is the last step of TcR assembly in the endoplasmic reticulum and is required for transport to the cell surface.

Its subcellular location is the cell membrane. Probable non-functional open reading frame (ORF) of V region of the variable domain of T cell receptor (TR) beta chain. Non-functional ORF generally cannot participate in the synthesis of a productive T cell receptor (TR) chain due to altered V-(D)-J or switch recombination and/or splicing site (at mRNA level) and/or conserved amino acid change (protein level). Alpha-beta T cell receptors are antigen specific receptors which are essential to the immune response and are present on the cell surface of T lymphocytes. Recognize peptide-major histocompatibility (MH) (pMH) complexes that are displayed by antigen presenting cells (APC), a prerequisite for efficient T cell adaptive immunity against pathogens. Binding of alpha-beta TR to pMH complex initiates TR-CD3 clustering on the cell surface and intracellular activation of LCK that phosphorylates the ITAM motifs of CD3G, CD3D, CD3E and CD247 enabling the recruitment of ZAP70. In turn ZAP70 phosphorylates LAT, which recruits numerous signaling molecules to form the LAT signalosome. The LAT signalosome propagates signal branching to three major signaling pathways, the calcium, the mitogen-activated protein kinase (MAPK) kinase and the nuclear factor NF-kappa-B (NF-kB) pathways, leading to the mobilization of transcription factors that are critical for gene expression and essential for T cell growth and differentiation. The T cell repertoire is generated in the thymus, by V-(D)-J rearrangement. This repertoire is then shaped by intrathymic selection events to generate a peripheral T cell pool of self-MH restricted, non-autoaggressive T cells. Post-thymic interaction of alpha-beta TR with the pMH complexes shapes TR structural and functional avidity. The sequence is that of Probable non-functional T cell receptor beta variable 7-3 from Homo sapiens (Human).